Here is a 332-residue protein sequence, read N- to C-terminus: Ferredoxin--NADP reductase 2 (332 aa).

7 residues coordinate FAD: glutamate 37, glutamine 45, tyrosine 50, valine 90, phenylalanine 124, aspartate 285, and threonine 326.

Belongs to the ferredoxin--NADP reductase type 2 family. Homodimer. The cofactor is FAD.

It carries out the reaction 2 reduced [2Fe-2S]-[ferredoxin] + NADP(+) + H(+) = 2 oxidized [2Fe-2S]-[ferredoxin] + NADPH. This is Ferredoxin--NADP reductase 2 (yumC) from Bacillus subtilis (strain 168).